Consider the following 615-residue polypeptide: UvrABC system protein C (615 aa).

One can recognise a GIY-YIG domain in the interval 12–91 (EKPGVYIMKD…IKKYKPKYNV (80 aa)). The 36-residue stretch at 203-238 (DWLIQKLKEDMKKAAEELRFEEAARIRDQIFAIERT) folds into the UVR domain.

The protein belongs to the UvrC family. Interacts with UvrB in an incision complex.

The protein localises to the cytoplasm. In terms of biological role, the UvrABC repair system catalyzes the recognition and processing of DNA lesions. UvrC both incises the 5' and 3' sides of the lesion. The N-terminal half is responsible for the 3' incision and the C-terminal half is responsible for the 5' incision. In Thermoanaerobacter pseudethanolicus (strain ATCC 33223 / 39E) (Clostridium thermohydrosulfuricum), this protein is UvrABC system protein C.